Reading from the N-terminus, the 390-residue chain is S-adenosylmethionine synthase 4 (390 aa).

Mg(2+) is bound at residue Glu9. Residue His15 coordinates ATP. Residue Glu43 coordinates K(+). 2 residues coordinate L-methionine: Glu56 and Gln99. ATP contacts are provided by residues 167 to 169, 235 to 238, Asp246, 252 to 253, Ala269, Lys273, and Lys277; these read DGK, SGRF, and RK. Asp246 contacts L-methionine. Lys277 provides a ligand contact to L-methionine.

Belongs to the AdoMet synthase family. In terms of assembly, homotetramer. Mn(2+) serves as cofactor. Mg(2+) is required as a cofactor. It depends on Co(2+) as a cofactor. The cofactor is K(+). Mostly expressed in flowers, seedpods and roots, and, to a lower extent, in stems and leaves.

The protein resides in the cytoplasm. The catalysed reaction is L-methionine + ATP + H2O = S-adenosyl-L-methionine + phosphate + diphosphate. Its pathway is amino-acid biosynthesis; S-adenosyl-L-methionine biosynthesis; S-adenosyl-L-methionine from L-methionine: step 1/1. Functionally, catalyzes the formation of S-adenosylmethionine from methionine and ATP. The reaction comprises two steps that are both catalyzed by the same enzyme: formation of S-adenosylmethionine (AdoMet) and triphosphate, and subsequent hydrolysis of the triphosphate. The sequence is that of S-adenosylmethionine synthase 4 (MSAMS4) from Brassica juncea (Indian mustard).